Reading from the N-terminus, the 249-residue chain is Salivary antigen-5 (249 aa).

An N-terminal signal peptide occupies residues 1-26 (MAKTQCPLVFSLLALALIGTLQSSAA). One can recognise an SCP domain in the interval 50 to 193 (SIHNYYRNLT…WYAGYLVCNY (144 aa)). N-linked (GlcNAc...) asparagine glycosylation is found at asparagine 57, asparagine 127, and asparagine 168.

It belongs to the CRISP family. Venom allergen 5-like subfamily. Monomeric in solution. It depends on Cu(2+) as a cofactor. In terms of tissue distribution, saliva (at protein level). Salivary gland (at protein level).

The protein resides in the secreted. Its function is as follows. Antioxidant protein that scavenges superoxide radicals. Removes superoxide radicals produced by PMA-stimulated host neutrophils. Inhibits host platelet aggregation induced by low doses of collagen by interfering with the pro-aggregatory properties of reactive oxygen species on platelets. Binds to heparin and sulfated glycosaminoglycans. The sequence is that of Salivary antigen-5 from Dipetalogaster maximus (Blood-sucking bug).